The following is a 1157-amino-acid chain: ATP-dependent helicase/deoxyribonuclease subunit B (1157 aa).

The UvrD-like helicase ATP-binding domain maps to 1–277 (MTLQIIAGKA…KILLENKRAN (277 aa)). 8-15 (GKAGTGKT) is a binding site for ATP. The 320-residue stretch at 271 to 590 (LENKRANSDS…VLADMENAKL (320 aa)) folds into the UvrD-like helicase C-terminal domain. The [4Fe-4S] cluster site is built by Cys-794, Cys-1115, Cys-1118, and Cys-1124.

This sequence belongs to the helicase family. AddB/RexB type 1 subfamily. As to quaternary structure, heterodimer of AddA and AddB. It depends on Mg(2+) as a cofactor. Requires [4Fe-4S] cluster as cofactor.

Its function is as follows. The heterodimer acts as both an ATP-dependent DNA helicase and an ATP-dependent, dual-direction single-stranded exonuclease. Recognizes the chi site generating a DNA molecule suitable for the initiation of homologous recombination. The AddB subunit has 5' -&gt; 3' nuclease activity but not helicase activity. In Listeria innocua serovar 6a (strain ATCC BAA-680 / CLIP 11262), this protein is ATP-dependent helicase/deoxyribonuclease subunit B.